The chain runs to 118 residues: NADH-quinone oxidoreductase subunit A (118 aa).

3 helical membrane passes run 5–25 (YLGI…AFAV), 61–81 (FLYA…YPWA), and 90–110 (FAIV…WYAW).

This sequence belongs to the complex I subunit 3 family. NDH-1 is composed of 14 different subunits. Subunits NuoA, H, J, K, L, M, N constitute the membrane sector of the complex.

The protein localises to the cell membrane. It carries out the reaction a quinone + NADH + 5 H(+)(in) = a quinol + NAD(+) + 4 H(+)(out). Its function is as follows. NDH-1 shuttles electrons from NADH, via FMN and iron-sulfur (Fe-S) centers, to quinones in the respiratory chain. The immediate electron acceptor for the enzyme in this species is believed to be a menaquinone. Couples the redox reaction to proton translocation (for every two electrons transferred, four hydrogen ions are translocated across the cytoplasmic membrane), and thus conserves the redox energy in a proton gradient. In Heliobacterium modesticaldum (strain ATCC 51547 / Ice1), this protein is NADH-quinone oxidoreductase subunit A.